A 217-amino-acid chain; its full sequence is Oxygen-insensitive NAD(P)H nitroreductase (217 aa).

10–14 (RHSTK) contributes to the FMN binding site. Residues Lys14, Thr41, Thr67, Asn71, Lys74, and Arg107 each contribute to the NAD(+) site. Asn71 is an FMN binding site. Residues 165 to 166 (EG) and 205 to 207 (KSR) each bind FMN.

It belongs to the nitroreductase family. Homodimer. Requires FMN as cofactor.

Reduction of a variety of nitroaromatic compounds using NADH (and to lesser extent NADPH) as source of reducing equivalents; two electrons are transferred. This is Oxygen-insensitive NAD(P)H nitroreductase from Enterobacter cloacae.